The primary structure comprises 118 residues: uncharacterized protein (118 aa).

This is an uncharacterized protein from Clostridium perfringens.